Here is a 551-residue protein sequence, read N- to C-terminus: Chaperonin GroEL 4 (551 aa).

ATP is bound by residues 30-33 (TLGP), Lys-51, 87-91 (DGTTT), Gly-415, and Asp-495.

This sequence belongs to the chaperonin (HSP60) family. Forms a cylinder of 14 subunits composed of two heptameric rings stacked back-to-back. Interacts with the co-chaperonin GroES.

It is found in the cytoplasm. It carries out the reaction ATP + H2O + a folded polypeptide = ADP + phosphate + an unfolded polypeptide.. Together with its co-chaperonin GroES, plays an essential role in assisting protein folding. The GroEL-GroES system forms a nano-cage that allows encapsulation of the non-native substrate proteins and provides a physical environment optimized to promote and accelerate protein folding. The polypeptide is Chaperonin GroEL 4 (Mesorhizobium japonicum (strain LMG 29417 / CECT 9101 / MAFF 303099) (Mesorhizobium loti (strain MAFF 303099))).